Here is a 558-residue protein sequence, read N- to C-terminus: NAD(P)H-quinone oxidoreductase chain 4 (558 aa).

14 helical membrane-spanning segments follow: residues 25–45, 56–76, 111–131, 133–153, 157–177, 189–209, 230–250, 264–284, 298–318, 327–347, 353–373, 395–417, 438–458, and 485–505; these read FPWL…VPFI, WYAL…YLKG, LILL…PVSF, PKLF…VFAV, LLFF…LAIW, FIIY…AMGF, GFQL…LPVV, TAPV…YALL, FAPL…LTSF, IAYS…SFSS, AMLQ…LVGA, IMFA…SGFV, IVIA…LLSM, and IYVI…PRIM.

This sequence belongs to the complex I subunit 4 family.

Its subcellular location is the cellular thylakoid membrane. It carries out the reaction a plastoquinone + NADH + (n+1) H(+)(in) = a plastoquinol + NAD(+) + n H(+)(out). The enzyme catalyses a plastoquinone + NADPH + (n+1) H(+)(in) = a plastoquinol + NADP(+) + n H(+)(out). Functionally, NDH-1 shuttles electrons from NAD(P)H, via FMN and iron-sulfur (Fe-S) centers, to quinones in the respiratory chain. The immediate electron acceptor for the enzyme in this species is believed to be plastoquinone. Couples the redox reaction to proton translocation (for every two electrons transferred, four hydrogen ions are translocated across the cytoplasmic membrane), and thus conserves the redox energy in a proton gradient. The sequence is that of NAD(P)H-quinone oxidoreductase chain 4 from Prochlorococcus marinus (strain MIT 9211).